The following is a 934-amino-acid chain: MSAHDLKLEEIVNPETLRRKLNELADSTDENYTSPTVRKVVLQALKDALVRGRANAEGMLMKDGGGTLCAKRLSFLMDTLIEALFEFATTKAYPMINPSKAENMAIVAVGGYGRGGLAPGSDIDLLFLLPYKQTPWGEQVVEYMLYMLWDMGLKVGHSTRNIDECIRLSREDMTIRTAILDARFLTGNRELFKTLVTRFDEEIVKDTGPEFIQAKLAERDQRHRKAGETRYLVEPNVKEGKGGQRDLHTLFWITKYFYRVKTKEELVKLGVLSRAELKLFNKAEDFLWAVRCHMHFATLKAEERLSFDIQPEIAQRLGYTAHPGQNYVERFMKHYFLVAKDVGDLTRIISAALEEQQAKHVPGFNRIFLTFSRRKRKLSADGDFVSENHRINIARPEVFKEDPVNIIRLFHLADKHGLEFHPEAMQSLTRSLKLINSDLRENPEANKLFLEILTSPRNPELILRRMNESGVLGKFIPDFGKIVAMMQFNMYHHYTVDEHLLRCIAVLSEIEHGELENEHPLSNHLITTVKRDRNLLYVALLLHDIAKGRPEDHSVAGARIARRLGPRLGLTPTETETVEWLVREHLTMSMVAQSRDLNDRKTIIDFADTVQTMERLKLLLILTVCDIKAVGPGVWNGWKGQLLRTLFYETELVLTGGFSELSRADRDHQAREALADRLSDWPKDKRDAYLALHYTNYFLTVSLEDQVRHAHFIREADRNERALATMAKPHTFEAVTEITVLAPDHPRLLSIITGACAAAGANIVDAQIFTTGDGRALDTILISREFDTDDDERRRAERVGKVIEDVLSGKAHLPDVLAKRTKPKRAAKAFKVEPRVEINNTLSNKFTVIEVEGLDRPGLLSELTGLISDLSLDIASAHITTFGEKVIDSFYVTDLVGHKISNATRQGNIRRKLLGVLSGENGSKTNGRSSQAAA.

The interval 1-379 (MSAHDLKLEE…TFSRRKRKLS (379 aa)) is uridylyltransferase. Residues 380-736 (ADGDFVSENH…AKPHTFEAVT (357 aa)) form a uridylyl-removing region. The HD domain maps to 496–613 (VDEHLLRCIA…IDFADTVQTM (118 aa)). ACT domains lie at 737–819 (EITV…VLAK) and 848–931 (VIEV…RSSQ).

It belongs to the GlnD family. The cofactor is Mg(2+).

It catalyses the reaction [protein-PII]-L-tyrosine + UTP = [protein-PII]-uridylyl-L-tyrosine + diphosphate. The catalysed reaction is [protein-PII]-uridylyl-L-tyrosine + H2O = [protein-PII]-L-tyrosine + UMP + H(+). Uridylyltransferase (UTase) activity is inhibited by glutamine, while glutamine activates uridylyl-removing (UR) activity. Functionally, modifies, by uridylylation and deuridylylation, the PII regulatory proteins (GlnB and homologs), in response to the nitrogen status of the cell that GlnD senses through the glutamine level. Under low glutamine levels, catalyzes the conversion of the PII proteins and UTP to PII-UMP and PPi, while under higher glutamine levels, GlnD hydrolyzes PII-UMP to PII and UMP (deuridylylation). Thus, controls uridylylation state and activity of the PII proteins, and plays an important role in the regulation of nitrogen assimilation and metabolism. This is Bifunctional uridylyltransferase/uridylyl-removing enzyme from Brucella anthropi (strain ATCC 49188 / DSM 6882 / CCUG 24695 / JCM 21032 / LMG 3331 / NBRC 15819 / NCTC 12168 / Alc 37) (Ochrobactrum anthropi).